The primary structure comprises 120 residues: Large ribosomal subunit protein uL18 (120 aa).

This sequence belongs to the universal ribosomal protein uL18 family. Part of the 50S ribosomal subunit; part of the 5S rRNA/L5/L18/L25 subcomplex. Contacts the 5S and 23S rRNAs.

Its function is as follows. This is one of the proteins that bind and probably mediate the attachment of the 5S RNA into the large ribosomal subunit, where it forms part of the central protuberance. The sequence is that of Large ribosomal subunit protein uL18 from Sinorhizobium medicae (strain WSM419) (Ensifer medicae).